The chain runs to 227 residues: Cytochrome c oxidase subunit 2 (227 aa).

At Met-1 the chain carries N-formylmethionine. Topologically, residues 1–14 (MAYPMQLGFQDATS) are mitochondrial intermembrane. The helical transmembrane segment at 15 to 45 (PIMEELLHFHDHTLMIVFLISSLVLYIISLM) threads the bilayer. Residues 46-59 (LTTKLTHTSTMDAQ) lie on the Mitochondrial matrix side of the membrane. Residues 60–87 (EVETIWTILPAIILILIALPSLRILYMM) form a helical membrane-spanning segment. At 88 to 227 (DEINNPSLTV…YFEKWSASML (140 aa)) the chain is on the mitochondrial intermembrane side. Residues His-161, Cys-196, Glu-198, Cys-200, His-204, and Met-207 each coordinate Cu cation. Glu-198 lines the Mg(2+) pocket. Residue Tyr-218 is modified to Phosphotyrosine.

Belongs to the cytochrome c oxidase subunit 2 family. Component of the cytochrome c oxidase (complex IV, CIV), a multisubunit enzyme composed of 14 subunits. The complex is composed of a catalytic core of 3 subunits MT-CO1, MT-CO2 and MT-CO3, encoded in the mitochondrial DNA, and 11 supernumerary subunits COX4I, COX5A, COX5B, COX6A, COX6B, COX6C, COX7A, COX7B, COX7C, COX8 and NDUFA4, which are encoded in the nuclear genome. The complex exists as a monomer or a dimer and forms supercomplexes (SCs) in the inner mitochondrial membrane with NADH-ubiquinone oxidoreductase (complex I, CI) and ubiquinol-cytochrome c oxidoreductase (cytochrome b-c1 complex, complex III, CIII), resulting in different assemblies (supercomplex SCI(1)III(2)IV(1) and megacomplex MCI(2)III(2)IV(2)). Found in a complex with TMEM177, COA6, COX18, COX20, SCO1 and SCO2. Interacts with TMEM177 in a COX20-dependent manner. Interacts with COX20. Interacts with COX16. The cofactor is Cu cation.

It is found in the mitochondrion inner membrane. The catalysed reaction is 4 Fe(II)-[cytochrome c] + O2 + 8 H(+)(in) = 4 Fe(III)-[cytochrome c] + 2 H2O + 4 H(+)(out). Component of the cytochrome c oxidase, the last enzyme in the mitochondrial electron transport chain which drives oxidative phosphorylation. The respiratory chain contains 3 multisubunit complexes succinate dehydrogenase (complex II, CII), ubiquinol-cytochrome c oxidoreductase (cytochrome b-c1 complex, complex III, CIII) and cytochrome c oxidase (complex IV, CIV), that cooperate to transfer electrons derived from NADH and succinate to molecular oxygen, creating an electrochemical gradient over the inner membrane that drives transmembrane transport and the ATP synthase. Cytochrome c oxidase is the component of the respiratory chain that catalyzes the reduction of oxygen to water. Electrons originating from reduced cytochrome c in the intermembrane space (IMS) are transferred via the dinuclear copper A center (CU(A)) of subunit 2 and heme A of subunit 1 to the active site in subunit 1, a binuclear center (BNC) formed by heme A3 and copper B (CU(B)). The BNC reduces molecular oxygen to 2 water molecules using 4 electrons from cytochrome c in the IMS and 4 protons from the mitochondrial matrix. The chain is Cytochrome c oxidase subunit 2 (MT-CO2) from Bos indicus (Zebu).